The primary structure comprises 748 residues: Polyribonucleotide nucleotidyltransferase (748 aa).

Positions 487 and 493 each coordinate Mg(2+). Positions 554–613 (PSTTTIKIDKDKIRDIIGPGGKVIKEICETSGAKIDISDDGTVSVYASDRDKLKVALDKI) constitute a KH domain. In terms of domain architecture, S1 motif spans 623 to 691 (GEIFNGTVVK…NKGKAKLTIK (69 aa)). The interval 695 to 733 (KDKFSNNTKPKTSVNNTKDNSEPEQRHDSSKKRAWNEDN) is disordered. The segment covering 699–712 (SNNTKPKTSVNNTK) has biased composition (polar residues). Residues 713–722 (DNSEPEQRHD) show a composition bias toward basic and acidic residues.

The protein belongs to the polyribonucleotide nucleotidyltransferase family. Mg(2+) is required as a cofactor.

It localises to the cytoplasm. The catalysed reaction is RNA(n+1) + phosphate = RNA(n) + a ribonucleoside 5'-diphosphate. In terms of biological role, involved in mRNA degradation. Catalyzes the phosphorolysis of single-stranded polyribonucleotides processively in the 3'- to 5'-direction. The sequence is that of Polyribonucleotide nucleotidyltransferase from Rickettsia rickettsii (strain Iowa).